Consider the following 148-residue polypeptide: MSELTEEQIAEFKDAFVQFDKEGTGKIATRELGTLMRTLGQNPTEAELQDLIAEAENNNNGQLNFTEFCGIMAKQMRETDTEEEMREAFKIFDRDGDGFISPAELRFVMINLGEKVTDEEIDEMIREADFDGDGMINYEEFVWMISQK.

4 EF-hand domains span residues 7–42 (EQIA…LGQN), 43–78 (PTEA…QMRE), 80–115 (DTEE…LGEK), and 116–148 (VTDE…ISQK). Residues Asp20, Thr24, Lys26, Glu31, Asn58, Asn60, Gln62, Glu67, Asp93, Asp95, Asp97, Glu104, Asp129, Asp131, Asp133, Met135, and Glu140 each contribute to the Ca(2+) site.

The protein belongs to the calmodulin family.

Functionally, may be involved in calcium-mediated signal transduction. The polypeptide is Calmodulin-related protein 97A (Acam) (Drosophila melanogaster (Fruit fly)).